A 590-amino-acid chain; its full sequence is Aspartate--tRNA(Asp/Asn) ligase (590 aa).

Glutamate 170 provides a ligand contact to L-aspartate. The aspartate stretch occupies residues 194 to 197; that stretch reads QLFK. Arginine 216 contributes to the L-aspartate binding site. ATP-binding positions include 216 to 218 and glutamine 225; that span reads RDE. Histidine 448 is an L-aspartate binding site. Glutamate 482 is a binding site for ATP. Arginine 489 is an L-aspartate binding site. 534 to 537 lines the ATP pocket; that stretch reads GWDR. Positions 557 to 590 are disordered; the sequence is SGGGADPLTGAPAPITPQQRRESGIDAKPKKDGE. Positions 575-590 are enriched in basic and acidic residues; the sequence is QRRESGIDAKPKKDGE.

This sequence belongs to the class-II aminoacyl-tRNA synthetase family. Type 1 subfamily. Homodimer.

It localises to the cytoplasm. The catalysed reaction is tRNA(Asx) + L-aspartate + ATP = L-aspartyl-tRNA(Asx) + AMP + diphosphate. In terms of biological role, aspartyl-tRNA synthetase with relaxed tRNA specificity since it is able to aspartylate not only its cognate tRNA(Asp) but also tRNA(Asn). Reaction proceeds in two steps: L-aspartate is first activated by ATP to form Asp-AMP and then transferred to the acceptor end of tRNA(Asp/Asn). This chain is Aspartate--tRNA(Asp/Asn) ligase, found in Mycobacterium sp. (strain JLS).